Consider the following 484-residue polypeptide: Probable protein disulfide-isomerase ER-60 (484 aa).

Residues 1–14 (MRWLLSCLFLVAFA) form the signal peptide. Thioredoxin domains are found at residues 15-125 (SCSK…SRAG) and 338-467 (FEDG…REAT). Active-site nucleophile residues include C46, C49, C388, and C391. 2 cysteine pairs are disulfide-bonded: C46-C49 and C388-C391. A Prevents secretion from ER motif is present at residues 481 to 484 (KSEL).

The protein belongs to the protein disulfide isomerase family.

It localises to the endoplasmic reticulum lumen. The enzyme catalyses Catalyzes the rearrangement of -S-S- bonds in proteins.. The protein is Probable protein disulfide-isomerase ER-60 of Schistosoma mansoni (Blood fluke).